A 274-amino-acid chain; its full sequence is Thiamine kinase (274 aa).

It belongs to the thiamine kinase family.

It catalyses the reaction thiamine + ATP = thiamine phosphate + ADP + H(+). It participates in cofactor biosynthesis; thiamine diphosphate biosynthesis; thiamine phosphate from thiamine: step 1/1. In terms of biological role, catalyzes the ATP-dependent phosphorylation of thiamine to thiamine phosphate. Is involved in thiamine salvage. This is Thiamine kinase from Salmonella gallinarum (strain 287/91 / NCTC 13346).